A 160-amino-acid polypeptide reads, in one-letter code: MVPKLFTSPICLLLLLGLMGVEGSLHAKPRQFTWAQWFEIQHINMTSGQCTNAMLVINNYQRRCKNQNTFLLTTFADVVHVCGNPSMPCPSNTSLNNCHHSGVQVPLIHCNLTTPSRRISNCRYTQTTANKYYIVACNNSDPVRDPPQYPVVPVHLDRVI.

The N-terminal stretch at 1 to 27 (MVPKLFTSPICLLLLLGLMGVEGSLHA) is a signal peptide. Trp34 is a glycosylation site (C-linked (Man) tryptophan). His42 (proton acceptor) is an active-site residue. An N-linked (GlcNAc...) asparagine glycan is attached at Asn44. Intrachain disulfides connect Cys50-Cys110, Cys64-Cys122, Cys82-Cys137, and Cys89-Cys98. Position 60 is a 3'-nitrotyrosine (Tyr60). Residue 65–69 (KNQNT) coordinates substrate. Residues Asn92, Asn111, and Asn138 are each glycosylated (N-linked (GlcNAc...) asparagine). His155 functions as the Proton donor in the catalytic mechanism.

Belongs to the pancreatic ribonuclease family. In terms of assembly, interacts with and forms a tight 1:1 complex with RNH1. Dimerization of two such complexes may occur.

The protein resides in the lysosome. It is found in the cytoplasmic granule. It carries out the reaction an [RNA] containing cytidine + H2O = an [RNA]-3'-cytidine-3'-phosphate + a 5'-hydroxy-ribonucleotide-3'-[RNA].. The enzyme catalyses an [RNA] containing uridine + H2O = an [RNA]-3'-uridine-3'-phosphate + a 5'-hydroxy-ribonucleotide-3'-[RNA].. Its function is as follows. This is a non-secretory ribonuclease. It is a pyrimidine specific nuclease with a slight preference for U. Cytotoxin and helminthotoxin. Possesses a wide variety of biological activities. In Macaca nemestrina (Pig-tailed macaque), this protein is Non-secretory ribonuclease (RNASE2).